We begin with the raw amino-acid sequence, 539 residues long: Transcription factor LG2 (539 aa).

Positions 115–125 (MRQQQQLHSGN) are enriched in polar residues. 2 disordered regions span residues 115–140 (MRQQ…SAQN) and 181–246 (KPGL…KSRL). Composition is skewed to low complexity over residues 126–137 (SQSVGSTTDSSS) and 192–205 (QQQH…QQQL). Basic and acidic residues predominate over residues 219 to 242 (TRKDGKSVDAKTERRLAQNREAAR). A bZIP domain is found at 227 to 271 (DAKTERRLAQNREAARKSRLRKKAYVQNLETSRVRLQQIEQELQR). Residues 229-249 (KTERRLAQNREAARKSRLRKK) are basic motif. The interval 255–269 (LETSRVRLQQIEQEL) is leucine-zipper. One can recognise a DOG1 domain in the interval 292–506 (AAMFDMEYAR…RALSNLWSSR (215 aa)). A disordered region spans residues 513-539 (GTESVSPTGTELQPMHNQPQQNQYSGF).

This sequence belongs to the bZIP family. In terms of assembly, interacts with NPR1/NH1 and NPR3/NH3.

The protein resides in the nucleus. Transcriptional regulator involved in defense response. Acts as a transcriptional activator in vitro. This is Transcription factor LG2 from Oryza sativa subsp. japonica (Rice).